The following is a 380-amino-acid chain: Cytochrome b (380 aa).

The next 4 helical transmembrane spans lie at 33-53 (FGSLLGLCLVTQILTGLFLAM), 77-98 (WLIRNIHANGASFFFICLYLHV), 113-133 (WNIGVILLLLTMMTAFVGYVL), and 178-198 (FFAFHFLLPFVIAGASMIHLL). The heme b site is built by histidine 83 and histidine 97. Heme b is bound by residues histidine 182 and histidine 196. A ubiquinone is bound at residue histidine 201. Helical transmembrane passes span 226–246 (YKDLLGFILMLVGLTSVALFS), 288–308 (LGGVLALLFSILVLMLVPMLH), 320–340 (LSQILFWALVADMLVLTWIGG), and 347–367 (FVLIGQAASTVYFALFLIALP).

Belongs to the cytochrome b family. The cytochrome bc1 complex contains 3 respiratory subunits (MT-CYB, CYC1 and UQCRFS1), 2 core proteins (UQCRC1 and UQCRC2) and probably 6 low-molecular weight proteins. The cofactor is heme b.

The protein resides in the mitochondrion inner membrane. Component of the ubiquinol-cytochrome c reductase complex (complex III or cytochrome b-c1 complex) that is part of the mitochondrial respiratory chain. The b-c1 complex mediates electron transfer from ubiquinol to cytochrome c. Contributes to the generation of a proton gradient across the mitochondrial membrane that is then used for ATP synthesis. In Acipenser persicus (Persian sturgeon), this protein is Cytochrome b (mt-cyb).